The chain runs to 399 residues: Argininosuccinate synthase (399 aa).

12 to 20 (AFSGGLDTS) serves as a coordination point for ATP. L-citrulline is bound at residue Tyr90. ATP is bound at residue Gly120. Thr122, Asn126, and Asp127 together coordinate L-aspartate. Asn126 provides a ligand contact to L-citrulline. 4 residues coordinate L-citrulline: Arg130, Ser175, Glu260, and Tyr272.

Belongs to the argininosuccinate synthase family. Type 1 subfamily. Homotetramer.

It is found in the cytoplasm. It carries out the reaction L-citrulline + L-aspartate + ATP = 2-(N(omega)-L-arginino)succinate + AMP + diphosphate + H(+). The protein operates within amino-acid biosynthesis; L-arginine biosynthesis; L-arginine from L-ornithine and carbamoyl phosphate: step 2/3. The sequence is that of Argininosuccinate synthase from Methanothermobacter thermautotrophicus (strain ATCC 29096 / DSM 1053 / JCM 10044 / NBRC 100330 / Delta H) (Methanobacterium thermoautotrophicum).